The chain runs to 364 residues: Methylthioribose-1-phosphate isomerase (364 aa).

Substrate is bound by residues 53–55 (RGA), arginine 90, and glutamine 203. The active-site Proton donor is the aspartate 244. Residue 254 to 255 (NK) coordinates substrate.

This sequence belongs to the eIF-2B alpha/beta/delta subunits family. MtnA subfamily.

It carries out the reaction 5-(methylsulfanyl)-alpha-D-ribose 1-phosphate = 5-(methylsulfanyl)-D-ribulose 1-phosphate. It functions in the pathway amino-acid biosynthesis; L-methionine biosynthesis via salvage pathway; L-methionine from S-methyl-5-thio-alpha-D-ribose 1-phosphate: step 1/6. Its function is as follows. Catalyzes the interconversion of methylthioribose-1-phosphate (MTR-1-P) into methylthioribulose-1-phosphate (MTRu-1-P). This Rhizobium meliloti (strain 1021) (Ensifer meliloti) protein is Methylthioribose-1-phosphate isomerase.